The primary structure comprises 358 residues: Uroporphyrinogen decarboxylase (358 aa).

Substrate-binding positions include arginine 29–arginine 33, aspartate 79, tyrosine 155, serine 210, and histidine 330.

Belongs to the uroporphyrinogen decarboxylase family. In terms of assembly, homodimer.

The protein localises to the cytoplasm. It carries out the reaction uroporphyrinogen III + 4 H(+) = coproporphyrinogen III + 4 CO2. It functions in the pathway porphyrin-containing compound metabolism; protoporphyrin-IX biosynthesis; coproporphyrinogen-III from 5-aminolevulinate: step 4/4. Its function is as follows. Catalyzes the decarboxylation of four acetate groups of uroporphyrinogen-III to yield coproporphyrinogen-III. The chain is Uroporphyrinogen decarboxylase from Bordetella petrii (strain ATCC BAA-461 / DSM 12804 / CCUG 43448).